A 60-amino-acid chain; its full sequence is Large ribosomal subunit protein bL32 (60 aa).

Positions Met1–Asp60 are disordered. Positions Arg49–Asp60 are enriched in basic residues.

Belongs to the bacterial ribosomal protein bL32 family.

In Nitrosomonas eutropha (strain DSM 101675 / C91 / Nm57), this protein is Large ribosomal subunit protein bL32.